Here is a 443-residue protein sequence, read N- to C-terminus: MKHIDVSQLTQQFPLLQSLIALEPVSWFNPKATTLVEGVPYVGLDGSDVADASARLARFAPYLCEAFPETRASKGILESDIAAIPAMQATLNQRYGVEVTGRLLLKKDSHLPISGSIKARGGIYEVLAHAEQLAIKAGLLCEEDDYRKLFTDEFRHFFGQYSIAVGSTGNLGMSIGIMSARLGFRVTVHMSADAREWKKRKLRKHGAIVVEYAEDYGVAVEQGRKEAERDPNCFFIDDENSRTLFLGYAVAGERVKKQFDDMGIVVDADHPLFVYLPCGVGGGPGGVAFGLKLAFGDNVHCLFAEPTHSPCMLLGVHTGLHDAIAVQDLGIDNLTAADGLAVGRASGFVGRAMERLLAGFYTLSDQEMYDLLGLLARAEQIKLEPSALAGMAGPWRVAANLEWQASQGLNAAKMVRATHLVWATGGGMVPAEEMENYLASAHR.

Lys118 is subject to N6-(pyridoxal phosphate)lysine.

This sequence belongs to the serine/threonine dehydratase family. DsdA subfamily. Requires pyridoxal 5'-phosphate as cofactor.

The enzyme catalyses D-serine = pyruvate + NH4(+). The polypeptide is Probable D-serine dehydratase (Aeromonas hydrophila subsp. hydrophila (strain ATCC 7966 / DSM 30187 / BCRC 13018 / CCUG 14551 / JCM 1027 / KCTC 2358 / NCIMB 9240 / NCTC 8049)).